Consider the following 618-residue polypeptide: Chaperone protein HtpG (618 aa).

Residues 1 to 331 (MAKHTFQTEV…SEDLPLNVSR (331 aa)) form an a; substrate-binding region. Residues 332 to 541 (EILQQNRILA…EDDPNFAMIK (210 aa)) are b. The segment at 542-618 (MMRQMGNALG…RLNAMLERAI (77 aa)) is c.

The protein belongs to the heat shock protein 90 family. In terms of assembly, homodimer.

It localises to the cytoplasm. In terms of biological role, molecular chaperone. Has ATPase activity. The protein is Chaperone protein HtpG of Wolinella succinogenes (strain ATCC 29543 / DSM 1740 / CCUG 13145 / JCM 31913 / LMG 7466 / NCTC 11488 / FDC 602W) (Vibrio succinogenes).